The sequence spans 839 residues: ATP-binding cassette sub-family F member 1 (839 aa).

The segment at 1–258 (MPKGPKQQPP…KKEKKKLKKQ (258 aa)) is disordered. Serine 22 bears the Phosphoserine mark. A compositionally biased stretch (basic residues) spans 29 to 39 (KKGKKDKKTKK). Residues 47–64 (VEDKQAGEEEKLQKEKEQ) show a composition bias toward basic and acidic residues. The span at 71–83 (QKKKRDTRKGRRK) shows a compositional bias: basic residues. Phosphoserine is present on residues serine 105, serine 109, and serine 140. Positions 136–149 (IQDESEEEKEEEEE) are enriched in acidic residues. The segment covering 150-162 (KPVLKPAKPEKNR) has biased composition (basic and acidic residues). Threonine 195 carries the post-translational modification Phosphothreonine. Serine 197 bears the Phosphoserine mark. Over residues 206–223 (TKEKEPPRPGKDKDKKGA) the composition is skewed to basic and acidic residues. Serine 227 carries the phosphoserine modification. Basic residues predominate over residues 247–256 (LSKKEKKKLK). The 245-residue stretch at 298-542 (IKLEKFSISA…MYQQKQKELL (245 aa)) folds into the ABC transporter 1 domain. Residue 330 to 337 (GPNGKGKT) participates in ATP binding. Basic and acidic residues predominate over residues 553–574 (KELKAGGKSTKQAEKQTKEVLT). Residues 553-600 (KELKAGGKSTKQAEKQTKEVLTRKQQKCRRKNQDEESQDPPELLKRPR) are disordered. Serine 589 is modified (phosphoserine). Residues 619–834 (LGLHGVTFGY…VLEALGEVMV (216 aa)) form the ABC transporter 2 domain. ATP is bound at residue 652-659 (GPNGVGKS).

In terms of assembly, interacts (via N-terminus) with EIF2S1; the interaction is independent of its phosphorylated status. Associates (via both ABC transporter domains) with the ribosomes. In terms of processing, phosphorylated at phosphoserine and phosphothreonine. Phosphorylation on Ser-109 and Ser-140 by CK2; inhibits association of EIF2 with ribosomes.

It is found in the cytoplasm. The protein localises to the nucleus. It localises to the nucleoplasm. The protein resides in the nucleus envelope. Its function is as follows. Required for efficient Cap- and IRES-mediated mRNA translation initiation. Not involved in the ribosome biogenesis. This chain is ATP-binding cassette sub-family F member 1 (Abcf1), found in Rattus norvegicus (Rat).